A 370-amino-acid chain; its full sequence is 5-hydroxytryptamine receptor 5B (370 aa).

Residues 1–36 are disordered; that stretch reads MEVSNLSGATPGLAFPPGPESCSDSPSSGRSMGSTP. The Extracellular segment spans residues 1–48; sequence MEVSNLSGATPGLAFPPGPESCSDSPSSGRSMGSTPGGLILPGREPPF. Asn-5 carries an N-linked (GlcNAc...) asparagine glycan. Positions 20-36 are enriched in low complexity; that stretch reads ESCSDSPSSGRSMGSTP. Residues 49 to 75 traverse the membrane as a helical segment; the sequence is SAFTVLVVTLLVLLIAATFLWNLLVLV. The Cytoplasmic portion of the chain corresponds to 76-88; it reads TILRVRAFHRVPH. Residues 89 to 115 traverse the membrane as a helical segment; the sequence is NLVASTAVSDVLVAVLVMPLSLVSELS. At 116–127 the chain is on the extracellular side; the sequence is AGRRWQLGRSLC. An intrachain disulfide couples Cys-127 to Cys-205. The chain crosses the membrane as a helical span at residues 128–150; the sequence is HVWISFDVLCCTASIWNVAAIAL. Position 134 (Asp-134) interacts with serotonin. Over 151–168 the chain is Cytoplasmic; it reads DRYWTITRHLQYTLRTRS. The helical transmembrane segment at 169–189 threads the bilayer; it reads RASALMIAITWALSALIALAP. Residues 190-211 are Extracellular-facing; sequence LLFGWGEAYDARLQRCQVSQEP. A helical membrane pass occupies residues 212 to 233; it reads SYAVFSTCGAFYLPLAVVLFVY. The Cytoplasmic segment spans residues 234–300; sequence WKIYKAAKFR…QKEKRAAMMV (67 aa). A helical transmembrane segment spans residues 301-325; that stretch reads GILIGVFVLCWIPFFLTELISPLCA. Topologically, residues 326-327 are extracellular; that stretch reads CS. A helical membrane pass occupies residues 328–352; the sequence is LPPIWKSIFLWLGYSNSFFNPLIYT. Over 353–370 the chain is Cytoplasmic; that stretch reads AFNKNYNNAFKSLFTKQR.

Belongs to the G-protein coupled receptor 1 family. In terms of tissue distribution, expressed predominantly in the central nervous system; in the hippocampus, habenula, and the doral raphe.

It localises to the cell membrane. Its function is as follows. G-protein coupled receptor for 5-hydroxytryptamine (serotonin), a biogenic hormone that functions as a neurotransmitter, a hormone and a mitogen. Also functions as a receptor for ergot alkaloid derivatives and other psychoactive substances. Ligand binding causes a conformation change that triggers signaling via guanine nucleotide-binding proteins (G proteins) and modulates the activity of downstream effectors. Htr5b is coupled to G(i)/G(o) G alpha proteins and mediates inhibitory neurotransmission: signaling inhibits adenylate cyclase activity and activates a phosphatidylinositol-calcium second messenger system that regulates the release of Ca(2+) ions from intracellular stores. The chain is 5-hydroxytryptamine receptor 5B from Mus musculus (Mouse).